Here is a 70-residue protein sequence, read N- to C-terminus: Large ribosomal subunit protein uL29 (70 aa).

This sequence belongs to the universal ribosomal protein uL29 family.

This Symbiobacterium thermophilum (strain DSM 24528 / JCM 14929 / IAM 14863 / T) protein is Large ribosomal subunit protein uL29.